A 634-amino-acid chain; its full sequence is Beta-ketoacyl-[acyl-carrier-protein] synthase FabY (634 aa).

The Ketosynthase family 3 (KS3) domain occupies 78–546; sequence ERIFASTLVR…GNNASGVVLS (469 aa). Residues Cys-281, His-434, and His-472 each act as for beta-ketoacyl synthase activity in the active site.

Belongs to the thiolase-like superfamily. Beta-ketoacyl-ACP synthases family. In terms of assembly, homodimer.

It catalyses the reaction malonyl-[ACP] + acetyl-CoA + H(+) = 3-oxobutanoyl-[ACP] + CO2 + CoA. It participates in lipid metabolism; fatty acid biosynthesis. In terms of biological role, involved in the initiation of the fatty acid biosynthesis. Catalyzes the condensation of acetyl coenzyme A (acetyl-CoA) with malonyl-acyl carrier protein (ACP) to make the fatty acid synthesis (FAS) primer beta-acetoacetyl-ACP. It can also use short-chain acyl-CoA as substrates, including butyryl-CoA, and hexanoyl-CoA, but does not use any of the longer chain acyl-CoA substrates. This chain is Beta-ketoacyl-[acyl-carrier-protein] synthase FabY (fabY), found in Pseudomonas aeruginosa (strain ATCC 15692 / DSM 22644 / CIP 104116 / JCM 14847 / LMG 12228 / 1C / PRS 101 / PAO1).